The sequence spans 352 residues: Inhibin beta C chain (352 aa).

The first 18 residues, 1-18 (MTSSLLLAFLLLAPTTVA), serve as a signal peptide directing secretion. The propeptide occupies 19–236 (TPRAGGQCPA…VGGKHQIHRR (218 aa)). 3 N-linked (GlcNAc...) asparagine glycosylation sites follow: N110, N143, and N161. Cystine bridges form between C240/C248, C247/C317, C276/C349, and C280/C351.

The protein belongs to the TGF-beta family. As to quaternary structure, homodimeric or heterodimeric through association with alpha and beta subunits, linked by one or more disulfide bonds. Inhibins are heterodimers of one alpha and one beta subunit. Activins are homo- or heterodimers of beta subunits only. As to expression, expressed in benign prostatic hyperplasia.

The protein resides in the secreted. Inhibins and activins inhibit and activate, respectively, the secretion of follitropin by the pituitary gland. Inhibins/activins are involved in regulating a number of diverse functions such as hypothalamic and pituitary hormone secretion, gonadal hormone secretion, germ cell development and maturation, erythroid differentiation, insulin secretion, nerve cell survival, embryonic axial development or bone growth, depending on their subunit composition. Inhibins appear to oppose the functions of activins. The sequence is that of Inhibin beta C chain (INHBC) from Homo sapiens (Human).